The primary structure comprises 310 residues: Phosphoribosylaminoimidazole-succinocarboxamide synthase (310 aa).

The protein belongs to the SAICAR synthetase family.

The catalysed reaction is 5-amino-1-(5-phospho-D-ribosyl)imidazole-4-carboxylate + L-aspartate + ATP = (2S)-2-[5-amino-1-(5-phospho-beta-D-ribosyl)imidazole-4-carboxamido]succinate + ADP + phosphate + 2 H(+). It participates in purine metabolism; IMP biosynthesis via de novo pathway; 5-amino-1-(5-phospho-D-ribosyl)imidazole-4-carboxamide from 5-amino-1-(5-phospho-D-ribosyl)imidazole-4-carboxylate: step 1/2. This Stenotrophomonas maltophilia (strain K279a) protein is Phosphoribosylaminoimidazole-succinocarboxamide synthase.